A 170-amino-acid polypeptide reads, in one-letter code: NADH-quinone oxidoreductase subunit J (170 aa).

5 consecutive transmembrane segments (helical) span residues 1-21 (MEFV…FVII), 30-50 (VYLI…GAFF), 56-76 (VIIY…MLNI), 94-114 (IGPS…IFFL), and 138-158 (VFLV…IFHI).

This sequence belongs to the complex I subunit 6 family. As to quaternary structure, composed of 13 different subunits. Subunits NuoA, H, J, K, L, M, N constitute the membrane sector of the complex.

It localises to the cell membrane. The enzyme catalyses a quinone + NADH + 5 H(+)(in) = a quinol + NAD(+) + 4 H(+)(out). Functionally, NDH-1 shuttles electrons from NADH, via FMN and iron-sulfur (Fe-S) centers, to quinones in the respiratory chain. Couples the redox reaction to proton translocation (for every two electrons transferred, four hydrogen ions are translocated across the cytoplasmic membrane), and thus conserves the redox energy in a proton gradient. This chain is NADH-quinone oxidoreductase subunit J (nuoJ), found in Buchnera aphidicola subsp. Acyrthosiphon pisum (strain APS) (Acyrthosiphon pisum symbiotic bacterium).